We begin with the raw amino-acid sequence, 119 residues long: Ribonuclease P protein component (119 aa).

It belongs to the RnpA family. In terms of assembly, consists of a catalytic RNA component (M1 or rnpB) and a protein subunit.

The enzyme catalyses Endonucleolytic cleavage of RNA, removing 5'-extranucleotides from tRNA precursor.. In terms of biological role, RNaseP catalyzes the removal of the 5'-leader sequence from pre-tRNA to produce the mature 5'-terminus. It can also cleave other RNA substrates such as 4.5S RNA. The protein component plays an auxiliary but essential role in vivo by binding to the 5'-leader sequence and broadening the substrate specificity of the ribozyme. The sequence is that of Ribonuclease P protein component from Streptococcus gordonii (strain Challis / ATCC 35105 / BCRC 15272 / CH1 / DL1 / V288).